A 126-amino-acid polypeptide reads, in one-letter code: Ribosome-binding factor A (126 aa).

Belongs to the RbfA family. In terms of assembly, monomer. Binds 30S ribosomal subunits, but not 50S ribosomal subunits or 70S ribosomes.

Its subcellular location is the cytoplasm. In terms of biological role, one of several proteins that assist in the late maturation steps of the functional core of the 30S ribosomal subunit. Associates with free 30S ribosomal subunits (but not with 30S subunits that are part of 70S ribosomes or polysomes). Required for efficient processing of 16S rRNA. May interact with the 5'-terminal helix region of 16S rRNA. The protein is Ribosome-binding factor A of Nitrosospira multiformis (strain ATCC 25196 / NCIMB 11849 / C 71).